Consider the following 262-residue polypeptide: Zinc import ATP-binding protein ZnuC (262 aa).

Residues 6–221 (IRLDKVAVTL…PAFVELFGKN (216 aa)) form the ABC transporter domain. An ATP-binding site is contributed by 38–45 (GPNGAGKT).

Belongs to the ABC transporter superfamily. Zinc importer (TC 3.A.1.15.5) family. As to quaternary structure, the complex is composed of two ATP-binding proteins (ZnuC), two transmembrane proteins (ZnuB) and a solute-binding protein (ZnuA).

It localises to the cell inner membrane. It catalyses the reaction Zn(2+)(out) + ATP(in) + H2O(in) = Zn(2+)(in) + ADP(in) + phosphate(in) + H(+)(in). Part of the ABC transporter complex ZnuABC involved in zinc import. Responsible for energy coupling to the transport system. The chain is Zinc import ATP-binding protein ZnuC from Pseudomonas syringae pv. syringae (strain B728a).